Here is a 75-residue protein sequence, read N- to C-terminus: UPF0352 protein YejL (75 aa).

The protein belongs to the UPF0352 family.

This chain is UPF0352 protein YejL, found in Shigella dysenteriae serotype 1 (strain Sd197).